The sequence spans 316 residues: ATP synthase gamma chain (316 aa).

Belongs to the ATPase gamma chain family. F-type ATPases have 2 components, CF(1) - the catalytic core - and CF(0) - the membrane proton channel. CF(1) has five subunits: alpha(3), beta(3), gamma(1), delta(1), epsilon(1). CF(0) has three main subunits: a, b and c.

It localises to the cellular thylakoid membrane. In terms of biological role, produces ATP from ADP in the presence of a proton gradient across the membrane. The gamma chain is believed to be important in regulating ATPase activity and the flow of protons through the CF(0) complex. The sequence is that of ATP synthase gamma chain from Prochlorococcus marinus (strain MIT 9215).